The sequence spans 670 residues: MTSERKMLVTSALPYANGHLHLGHLVEHIQTDIWVRTHKMLGIQCISVCGDDAHGTPIMLKAEQLGITPEALTAEIKLSHEKDFKAFAIDYDYYHTTHSPENQALATTIFERLQAGGDIVKKTIRQFYDPVKQMFLPDRYVKGTCPKCAAVDQYGDNCEVCGATYSPTDLINPVSVISGASPVEMESEHYFFDLPRYEELLKDWTRKGHLQTEVTNKLSEWFEAGLKQWDISRDAPYFGFPIPGVPDKYFYVWLDAPIGYMASFKKYCDERGVSFDEFWDKASKTELYHFVGKDIVYFHALFWPAMLAASGFRTPTAVYTHGFLTVEGQKMSKSRGTFIEARAYLAHLHPEYLRYYFAAKLNGRVDDLDLNFDDFVNRVNADLVGKVVNIASRCAGFINKRFDNRLSSELINQKLYNDLLSAREFVIDAFVSRDYARAIRQIMDCADKVNQYIDANKPWVLAKDESKLNEVHAICTMGINLFRILITYLKPVLPMMAKASEEFLNSEPLHWGSIDKPLLNHRINTFKPLMVRVEKEKIEAMLVQSKESLMTTPIKENTPVEDSNLISIEDFAKVDLRIAKIVNAEPVEGADKLMRLILDLGDAQKQVFAGIKKAYDAEELIGRLTVMVANLEPRTMRFGVSEGMVLAAGDGQGIYLLQPDAGAFPGMKVK.

The short motif at 14-24 (PYANGHLHLGH) is the 'HIGH' region element. Residues cysteine 145, cysteine 148, cysteine 158, and cysteine 161 each contribute to the Zn(2+) site. The 'KMSKS' region motif lies at 330–334 (KMSKS). Lysine 333 is an ATP binding site. The region spanning 570-670 (DFAKVDLRIA…AGAFPGMKVK (101 aa)) is the tRNA-binding domain.

This sequence belongs to the class-I aminoacyl-tRNA synthetase family. MetG type 1 subfamily. Homodimer. Zn(2+) serves as cofactor.

It is found in the cytoplasm. It catalyses the reaction tRNA(Met) + L-methionine + ATP = L-methionyl-tRNA(Met) + AMP + diphosphate. Functionally, is required not only for elongation of protein synthesis but also for the initiation of all mRNA translation through initiator tRNA(fMet) aminoacylation. In Legionella pneumophila (strain Corby), this protein is Methionine--tRNA ligase.